The sequence spans 148 residues: Large ribosomal subunit protein bL9 (148 aa).

This sequence belongs to the bacterial ribosomal protein bL9 family.

Its function is as follows. Binds to the 23S rRNA. This chain is Large ribosomal subunit protein bL9, found in Lysinibacillus sphaericus (strain C3-41).